Reading from the N-terminus, the 338-residue chain is 1-aminocyclopropane-1-carboxylate deaminase (338 aa).

N6-(pyridoxal phosphate)lysine is present on K51. S78 acts as the Nucleophile in catalysis.

It belongs to the ACC deaminase/D-cysteine desulfhydrase family. In terms of assembly, homotrimer. The cofactor is pyridoxal 5'-phosphate.

It carries out the reaction 1-aminocyclopropane-1-carboxylate + H2O = 2-oxobutanoate + NH4(+). Catalyzes a cyclopropane ring-opening reaction, the irreversible conversion of 1-aminocyclopropane-1-carboxylate (ACC) to ammonia and alpha-ketobutyrate. Allows growth on ACC as a nitrogen source. The protein is 1-aminocyclopropane-1-carboxylate deaminase of Burkholderia pseudomallei (strain 1710b).